Consider the following 211-residue polypeptide: Protein-lysine N-methyltransferase DDB_G0272708 (211 aa).

Belongs to the class I-like SAM-binding methyltransferase superfamily. EFM5 family.

Its subcellular location is the cytoplasm. S-adenosyl-L-methionine-dependent protein-lysine N-methyltransferase that methylates elongation factor 1-alpha. The polypeptide is Protein-lysine N-methyltransferase DDB_G0272708 (Dictyostelium discoideum (Social amoeba)).